A 1324-amino-acid chain; its full sequence is DNA-directed RNA polymerase subunit beta' (1324 aa).

Zn(2+) contacts are provided by cysteine 219, cysteine 292, cysteine 299, and cysteine 302. A disordered region spans residues 1293-1324 (ARDFEFASSDVEEDELTEEDDDYGDEEEEDAF). The segment covering 1302-1324 (DVEEDELTEEDDDYGDEEEEDAF) has biased composition (acidic residues).

Belongs to the RNA polymerase beta' chain family. RpoC2 subfamily. In terms of assembly, in cyanobacteria the RNAP catalytic core is composed of 2 alpha, 1 beta, 1 beta', 1 gamma and 1 omega subunit. When a sigma factor is associated with the core the holoenzyme is formed, which can initiate transcription. Zn(2+) is required as a cofactor.

It catalyses the reaction RNA(n) + a ribonucleoside 5'-triphosphate = RNA(n+1) + diphosphate. DNA-dependent RNA polymerase catalyzes the transcription of DNA into RNA using the four ribonucleoside triphosphates as substrates. This is DNA-directed RNA polymerase subunit beta' from Thermosynechococcus vestitus (strain NIES-2133 / IAM M-273 / BP-1).